We begin with the raw amino-acid sequence, 356 residues long: Chorismate synthase (356 aa).

2 residues coordinate NADP(+): Arg-48 and Arg-54. FMN contacts are provided by residues 125 to 127 (RSS), 237 to 238 (NA), Gly-281, 296 to 300 (KPTSS), and Arg-322.

It belongs to the chorismate synthase family. As to quaternary structure, homotetramer. FMNH2 is required as a cofactor.

The enzyme catalyses 5-O-(1-carboxyvinyl)-3-phosphoshikimate = chorismate + phosphate. It participates in metabolic intermediate biosynthesis; chorismate biosynthesis; chorismate from D-erythrose 4-phosphate and phosphoenolpyruvate: step 7/7. In terms of biological role, catalyzes the anti-1,4-elimination of the C-3 phosphate and the C-6 proR hydrogen from 5-enolpyruvylshikimate-3-phosphate (EPSP) to yield chorismate, which is the branch point compound that serves as the starting substrate for the three terminal pathways of aromatic amino acid biosynthesis. This reaction introduces a second double bond into the aromatic ring system. The chain is Chorismate synthase from Novosphingobium aromaticivorans (strain ATCC 700278 / DSM 12444 / CCUG 56034 / CIP 105152 / NBRC 16084 / F199).